The following is a 450-amino-acid chain: Chromosomal replication initiator protein DnaA (450 aa).

The interval 1–84 (MENIHDLWDR…AVKFIIPPNQ (84 aa)) is domain I, interacts with DnaA modulators. Positions 84-111 (QDDEELEFQSSKKKQRKPYEETNDFPQS) are domain II. The tract at residues 89-108 (LEFQSSKKKQRKPYEETNDF) is disordered. The segment at 112-328 (MLNPKYTFDT…GALIRVVAYS (217 aa)) is domain III, AAA+ region. Positions 156, 158, 159, and 160 each coordinate ATP. The domain IV, binds dsDNA stretch occupies residues 329–450 (SLINKEITAD…QEIQEKLKQL (122 aa)).

The protein belongs to the DnaA family. Oligomerizes as a right-handed, spiral filament on DNA at oriC.

It localises to the cytoplasm. Functionally, plays an essential role in the initiation and regulation of chromosomal replication. ATP-DnaA binds to the origin of replication (oriC) to initiate formation of the DNA replication initiation complex once per cell cycle. Binds the DnaA box (a 9 base pair repeat at the origin) and separates the double-stranded (ds)DNA. Forms a right-handed helical filament on oriC DNA; dsDNA binds to the exterior of the filament while single-stranded (ss)DNA is stabiized in the filament's interior. The ATP-DnaA-oriC complex binds and stabilizes one strand of the AT-rich DNA unwinding element (DUE), permitting loading of DNA polymerase. After initiation quickly degrades to an ADP-DnaA complex that is not apt for DNA replication. Binds acidic phospholipids. The polypeptide is Chromosomal replication initiator protein DnaA (Geobacillus kaustophilus (strain HTA426)).